The following is a 716-amino-acid chain: Polyribonucleotide nucleotidyltransferase (716 aa).

The Mg(2+) site is built by aspartate 486 and aspartate 492. In terms of domain architecture, KH spans 553–612; that stretch reads PHIYNIKINPEKIKDVIGKGGAVIRALSDETDTKIDISDDGNITIAALSQKSAAFAQQRI. An S1 motif domain is found at 622–690; sequence GRIYQGTVTR…RQGRIRLSIK (69 aa).

This sequence belongs to the polyribonucleotide nucleotidyltransferase family. Component of the RNA degradosome, which is a multiprotein complex involved in RNA processing and mRNA degradation. Requires Mg(2+) as cofactor.

The protein localises to the cytoplasm. It catalyses the reaction RNA(n+1) + phosphate = RNA(n) + a ribonucleoside 5'-diphosphate. Involved in mRNA degradation. Catalyzes the phosphorolysis of single-stranded polyribonucleotides processively in the 3'- to 5'-direction. The polypeptide is Polyribonucleotide nucleotidyltransferase (Hamiltonella defensa subsp. Acyrthosiphon pisum (strain 5AT)).